The primary structure comprises 178 residues: MNATPEKADDLIVVGKIFSVHGVRGEVKVYSFTDPIENLLDYPRWTLRHEGKVKQVELVSGRGSQKGLVVKLKGLEDRDEARLLSGYEICIARSLLPNLAADEYYWYQLVGLKVINQDEHLFGKVDHLLETGANDVMVVKPCAGSLDDRERLLPYTAQCVLAIDLEAGVMRVEWDADF.

The 78-residue stretch at 101–178 (ADEYYWYQLV…VMRVEWDADF (78 aa)) folds into the PRC barrel domain.

The protein belongs to the RimM family. As to quaternary structure, binds ribosomal protein uS19.

It is found in the cytoplasm. An accessory protein needed during the final step in the assembly of 30S ribosomal subunit, possibly for assembly of the head region. Essential for efficient processing of 16S rRNA. May be needed both before and after RbfA during the maturation of 16S rRNA. It has affinity for free ribosomal 30S subunits but not for 70S ribosomes. This Pseudomonas putida (strain GB-1) protein is Ribosome maturation factor RimM.